An 808-amino-acid polypeptide reads, in one-letter code: DNA gyrase subunit B (808 aa).

The 116-residue stretch at Ser429 to Pro544 folds into the Toprim domain. Mg(2+) is bound by residues Glu435, Asp509, and Asp511.

This sequence belongs to the type II topoisomerase GyrB family. In terms of assembly, heterotetramer, composed of two GyrA and two GyrB chains. In the heterotetramer, GyrA contains the active site tyrosine that forms a transient covalent intermediate with DNA, while GyrB binds cofactors and catalyzes ATP hydrolysis. The cofactor is Mg(2+). Requires Mn(2+) as cofactor. Ca(2+) serves as cofactor.

Its subcellular location is the cytoplasm. The catalysed reaction is ATP-dependent breakage, passage and rejoining of double-stranded DNA.. Its function is as follows. A type II topoisomerase that negatively supercoils closed circular double-stranded (ds) DNA in an ATP-dependent manner to modulate DNA topology and maintain chromosomes in an underwound state. Negative supercoiling favors strand separation, and DNA replication, transcription, recombination and repair, all of which involve strand separation. Also able to catalyze the interconversion of other topological isomers of dsDNA rings, including catenanes and knotted rings. Type II topoisomerases break and join 2 DNA strands simultaneously in an ATP-dependent manner. The polypeptide is DNA gyrase subunit B (Rickettsia felis (strain ATCC VR-1525 / URRWXCal2) (Rickettsia azadi)).